Consider the following 205-residue polypeptide: Putative C-type lectin protein FPV001/FPV260 (205 aa).

In terms of domain architecture, C-type lectin spans 84–187 (CPRDWISHNG…CSVRRYLVCK (104 aa)).

This is Putative C-type lectin protein FPV001/FPV260 from Fowlpox virus (strain NVSL) (FPV).